Reading from the N-terminus, the 223-residue chain is MNYATAGVAASTVVENRDVTIERLHRAEPVDAARIVLGSTLVVGDVRIRIVEVEAYGGEKDGPWPDPASHSYRGRTPRNEVMFGPAGHLYVYRSYGMHFCMNVSYGPVGVAGGVLLRAGEVLDGCATVQARRPRVTRPAEWARGPGNLGSATGVTLAENGAALFESDSPVRLEVAESDGWVSGPRVGVSTAADRPWRFWIPESPAVSAYRRSPRAMSADEQMG.

This sequence belongs to the DNA glycosylase MPG family.

This Rhodococcus jostii (strain RHA1) protein is Putative 3-methyladenine DNA glycosylase.